Consider the following 83-residue polypeptide: Cell division protein ZapB (83 aa).

Positions 7 to 80 form a coiled coil; that stretch reads EMLEKLEAKV…RVRTLLGKMD (74 aa).

This sequence belongs to the ZapB family. In terms of assembly, homodimer. The ends of the coiled-coil dimer bind to each other, forming polymers. Interacts with FtsZ.

It localises to the cytoplasm. Non-essential, abundant cell division factor that is required for proper Z-ring formation. It is recruited early to the divisome by direct interaction with FtsZ, stimulating Z-ring assembly and thereby promoting cell division earlier in the cell cycle. Its recruitment to the Z-ring requires functional FtsA or ZipA. The chain is Cell division protein ZapB from Photobacterium profundum (strain SS9).